Here is a 64-residue protein sequence, read N- to C-terminus: DNA gyrase inhibitor YacG (64 aa).

Residues Cys7, Cys10, Cys26, and Cys30 each coordinate Zn(2+). Positions Arg44–Gln64 are disordered.

This sequence belongs to the DNA gyrase inhibitor YacG family. In terms of assembly, interacts with GyrB. Zn(2+) is required as a cofactor.

In terms of biological role, inhibits all the catalytic activities of DNA gyrase by preventing its interaction with DNA. Acts by binding directly to the C-terminal domain of GyrB, which probably disrupts DNA binding by the gyrase. The sequence is that of DNA gyrase inhibitor YacG from Aeromonas hydrophila subsp. hydrophila (strain ATCC 7966 / DSM 30187 / BCRC 13018 / CCUG 14551 / JCM 1027 / KCTC 2358 / NCIMB 9240 / NCTC 8049).